The primary structure comprises 330 residues: Ketol-acid reductoisomerase (NADP(+)) (330 aa).

One can recognise a KARI N-terminal Rossmann domain in the interval 1-181 (MNVYYEQDAD…GGTKAGVIET (181 aa)). NADP(+) contacts are provided by residues 24 to 27 (YGSQ), Arg47, Ser50, Ser52, and 82 to 85 (DQTQ). His107 is an active-site residue. Position 133 (Gly133) interacts with NADP(+). A KARI C-terminal knotted domain is found at 182–327 (NFKDETETDL…AKLRNMMSWL (146 aa)). Mg(2+)-binding residues include Asp190, Glu194, Glu226, and Glu230. Ser251 contacts substrate.

It belongs to the ketol-acid reductoisomerase family. It depends on Mg(2+) as a cofactor.

It catalyses the reaction (2R)-2,3-dihydroxy-3-methylbutanoate + NADP(+) = (2S)-2-acetolactate + NADPH + H(+). The catalysed reaction is (2R,3R)-2,3-dihydroxy-3-methylpentanoate + NADP(+) = (S)-2-ethyl-2-hydroxy-3-oxobutanoate + NADPH + H(+). Its pathway is amino-acid biosynthesis; L-isoleucine biosynthesis; L-isoleucine from 2-oxobutanoate: step 2/4. It functions in the pathway amino-acid biosynthesis; L-valine biosynthesis; L-valine from pyruvate: step 2/4. Involved in the biosynthesis of branched-chain amino acids (BCAA). Catalyzes an alkyl-migration followed by a ketol-acid reduction of (S)-2-acetolactate (S2AL) to yield (R)-2,3-dihydroxy-isovalerate. In the isomerase reaction, S2AL is rearranged via a Mg-dependent methyl migration to produce 3-hydroxy-3-methyl-2-ketobutyrate (HMKB). In the reductase reaction, this 2-ketoacid undergoes a metal-dependent reduction by NADPH to yield (R)-2,3-dihydroxy-isovalerate. This is Ketol-acid reductoisomerase (NADP(+)) from Chlorobium luteolum (strain DSM 273 / BCRC 81028 / 2530) (Pelodictyon luteolum).